Consider the following 195-residue polypeptide: HTH-type transcriptional regulator BetI (195 aa).

One can recognise an HTH tetR-type domain in the interval 8–68 (EIRRAQLIDA…ATMRHVLRDL (61 aa)). Positions 31–50 (TLASVAQRASISTGIVSHYF) form a DNA-binding region, H-T-H motif.

It functions in the pathway amine and polyamine biosynthesis; betaine biosynthesis via choline pathway [regulation]. In terms of biological role, repressor involved in the biosynthesis of the osmoprotectant glycine betaine. It represses transcription of the choline transporter BetT and the genes of BetAB involved in the synthesis of glycine betaine. This Paraburkholderia xenovorans (strain LB400) protein is HTH-type transcriptional regulator BetI.